The following is a 257-amino-acid chain: Thiazole synthase (257 aa).

Catalysis depends on K95, which acts as the Schiff-base intermediate with DXP. Residues G156, 182–183, and 204–205 contribute to the 1-deoxy-D-xylulose 5-phosphate site; these read AG and NT.

The protein belongs to the ThiG family. As to quaternary structure, homotetramer. Forms heterodimers with either ThiH or ThiS.

Its subcellular location is the cytoplasm. The enzyme catalyses [ThiS sulfur-carrier protein]-C-terminal-Gly-aminoethanethioate + 2-iminoacetate + 1-deoxy-D-xylulose 5-phosphate = [ThiS sulfur-carrier protein]-C-terminal Gly-Gly + 2-[(2R,5Z)-2-carboxy-4-methylthiazol-5(2H)-ylidene]ethyl phosphate + 2 H2O + H(+). It participates in cofactor biosynthesis; thiamine diphosphate biosynthesis. Functionally, catalyzes the rearrangement of 1-deoxy-D-xylulose 5-phosphate (DXP) to produce the thiazole phosphate moiety of thiamine. Sulfur is provided by the thiocarboxylate moiety of the carrier protein ThiS. In vitro, sulfur can be provided by H(2)S. This is Thiazole synthase from Fusobacterium nucleatum subsp. nucleatum (strain ATCC 25586 / DSM 15643 / BCRC 10681 / CIP 101130 / JCM 8532 / KCTC 2640 / LMG 13131 / VPI 4355).